We begin with the raw amino-acid sequence, 85 residues long: Small ribosomal subunit protein uS17 (85 aa).

This sequence belongs to the universal ribosomal protein uS17 family. Part of the 30S ribosomal subunit.

Its function is as follows. One of the primary rRNA binding proteins, it binds specifically to the 5'-end of 16S ribosomal RNA. The sequence is that of Small ribosomal subunit protein uS17 from Acetivibrio thermocellus (strain ATCC 27405 / DSM 1237 / JCM 9322 / NBRC 103400 / NCIMB 10682 / NRRL B-4536 / VPI 7372) (Clostridium thermocellum).